The primary structure comprises 445 residues: Adenylosuccinate synthetase (445 aa).

GTP-binding positions include 12–18 (GDEGKGK) and 40–42 (GHT). Catalysis depends on aspartate 13, which acts as the Proton acceptor. Positions 13 and 40 each coordinate Mg(2+). IMP-binding positions include 13 to 16 (DEGK), 38 to 41 (NAGH), threonine 128, arginine 142, glutamine 223, threonine 238, and arginine 302. Histidine 41 functions as the Proton donor in the catalytic mechanism. 298-304 (TTTGRKR) serves as a coordination point for substrate. Residues arginine 304, 330-332 (KLD), and 411-413 (SLG) each bind GTP.

It belongs to the adenylosuccinate synthetase family. As to quaternary structure, homodimer. The cofactor is Mg(2+).

Its subcellular location is the cytoplasm. It carries out the reaction IMP + L-aspartate + GTP = N(6)-(1,2-dicarboxyethyl)-AMP + GDP + phosphate + 2 H(+). It participates in purine metabolism; AMP biosynthesis via de novo pathway; AMP from IMP: step 1/2. Plays an important role in the de novo pathway of purine nucleotide biosynthesis. Catalyzes the first committed step in the biosynthesis of AMP from IMP. In Cyanothece sp. (strain PCC 7425 / ATCC 29141), this protein is Adenylosuccinate synthetase.